A 158-amino-acid chain; its full sequence is Ribosome-binding factor A (158 aa).

The segment at 127–158 is disordered; it reads RQGAVHAGDADPYKESAAEEPAAYEDDERRPD. The segment covering 134–143 has biased composition (basic and acidic residues); the sequence is GDADPYKESA.

Belongs to the RbfA family. Monomer. Binds 30S ribosomal subunits, but not 50S ribosomal subunits or 70S ribosomes.

Its subcellular location is the cytoplasm. In terms of biological role, one of several proteins that assist in the late maturation steps of the functional core of the 30S ribosomal subunit. Associates with free 30S ribosomal subunits (but not with 30S subunits that are part of 70S ribosomes or polysomes). Required for efficient processing of 16S rRNA. May interact with the 5'-terminal helix region of 16S rRNA. The sequence is that of Ribosome-binding factor A from Mycobacteroides abscessus (strain ATCC 19977 / DSM 44196 / CCUG 20993 / CIP 104536 / JCM 13569 / NCTC 13031 / TMC 1543 / L948) (Mycobacterium abscessus).